The chain runs to 80 residues: MAKHLIVMFLVIMVISSLVDCAKKPFVQRVKNAASKAYNKLKGLAMQSQYGCPIISNMCEDHCRRKKMEGQCDLLDCVCS.

Positions methionine 1 to cysteine 21 are cleaved as a signal peptide. The BetaSPN-type CS-alpha/beta domain occupies glutamine 49–serine 80. Disulfide bonds link cysteine 52–cysteine 72, cysteine 59–cysteine 77, and cysteine 63–cysteine 79.

Belongs to the long chain scorpion toxin family. Class 2 subfamily. Expressed by the venom gland.

The protein localises to the secreted. In terms of biological role, dual-function toxin that acts both as an insecticidal and an antimicrobial peptide. May inhibit voltage-gated potassium channels (Kv). This amphipathic peptide causes significant antimicrobial activity against E.coli (MIC=7 uM) but does not show any activity against S.aureus even at high concentration. In vivo, causes paralysis or death to crickets. The polypeptide is Peptide LaIT2 (Liocheles australasiae (Dwarf wood scorpion)).